A 535-amino-acid polypeptide reads, in one-letter code: Nuclear/nucleolar GTPase 2 (535 aa).

A disordered region spans residues 1 to 42; sequence MAKKKERAVNVSGKPRHSLDVNRANDKKGAGGGAGGGGGGRS. Positions 17-29 are enriched in basic and acidic residues; sequence HSLDVNRANDKKG. The segment covering 30 to 41 has biased composition (gly residues); that stretch reads AGGGAGGGGGGR. Residues 213-374 form the CP-type G domain; that stretch reads WGELYKVIDS…LIDCPGVVYQ (162 aa). The G4 stretch occupies residues 261-264; sequence NKCD. The segment at 290–292 is G5; sequence SIN. The tract at residues 323–330 is G1; it reads GYPNVGKS. Residues 349-353 form a G2 region; sequence GETKV. The G3 stretch occupies residues 367-370; it reads DCPG. Residues 464–494 form a disordered region; it reads FFVPPPQQGEDSPSETAEPVEKSDEEGVSSD.

Belongs to the TRAFAC class YlqF/YawG GTPase family. RsgA subfamily. As to quaternary structure, interacts (via N-terminus) with the 60S ribosomal proteins RPL10A. This interaction is enhanced by the addition of GTP. In terms of tissue distribution, expressed in roots, shoot apical meristem, leaves, leaf sheaths and flowers.

It localises to the nucleus. Its subcellular location is the nucleolus. With respect to regulation, the GTPase activity is stimulated in the presence of ribosomes, particularly of the 60S subunit. In terms of biological role, GTPase involved in pre-60S ribosomal subunit maturation. This Oryza sativa subsp. japonica (Rice) protein is Nuclear/nucleolar GTPase 2.